A 162-amino-acid chain; its full sequence is Cytochrome c-type biogenesis protein CcmE (162 aa).

Over M1–R8 the chain is Cytoplasmic. The chain crosses the membrane as a helical; Signal-anchor for type II membrane protein span at residues L9 to A29. The Periplasmic portion of the chain corresponds to L30–K162. Heme-binding residues include H124 and Y128. Basic and acidic residues predominate over residues D139–N148. The tract at residues D139–K162 is disordered.

The protein belongs to the CcmE/CycJ family.

It localises to the cell inner membrane. Functionally, heme chaperone required for the biogenesis of c-type cytochromes. Transiently binds heme delivered by CcmC and transfers the heme to apo-cytochromes in a process facilitated by CcmF and CcmH. This chain is Cytochrome c-type biogenesis protein CcmE, found in Pseudomonas paraeruginosa (strain DSM 24068 / PA7) (Pseudomonas aeruginosa (strain PA7)).